The primary structure comprises 637 residues: Chaperone protein DnaK (637 aa).

T198 carries the phosphothreonine; by autocatalysis modification. Positions 600–637 (IAQQQAQAQQAQGADAGAQSKDDDVVDAEFEEVKDDKK) are disordered. The segment covering 601-618 (AQQQAQAQQAQGADAGAQ) has biased composition (low complexity). A compositionally biased stretch (acidic residues) spans 623 to 637 (DVVDAEFEEVKDDKK).

The protein belongs to the heat shock protein 70 family.

In terms of biological role, acts as a chaperone. This Vibrio parahaemolyticus serotype O3:K6 (strain RIMD 2210633) protein is Chaperone protein DnaK.